The following is a 366-amino-acid chain: Histidinol-phosphate aminotransferase 2 (366 aa).

Lys226 bears the N6-(pyridoxal phosphate)lysine mark.

Belongs to the class-II pyridoxal-phosphate-dependent aminotransferase family. Histidinol-phosphate aminotransferase subfamily. Homodimer. The cofactor is pyridoxal 5'-phosphate.

The catalysed reaction is L-histidinol phosphate + 2-oxoglutarate = 3-(imidazol-4-yl)-2-oxopropyl phosphate + L-glutamate. The protein operates within amino-acid biosynthesis; L-histidine biosynthesis; L-histidine from 5-phospho-alpha-D-ribose 1-diphosphate: step 7/9. The polypeptide is Histidinol-phosphate aminotransferase 2 (Cupriavidus pinatubonensis (strain JMP 134 / LMG 1197) (Cupriavidus necator (strain JMP 134))).